A 674-amino-acid chain; its full sequence is Penicillin-binding protein activator LpoA (674 aa).

The first 31 residues, 1–31 (MLSSTFVRTKAGRSKPVRLTAVIAAALFLAG), serve as a signal peptide directing secretion. Cys-32 is lipidated: N-palmitoyl cysteine. Cys-32 carries the S-diacylglycerol cysteine lipid modification. The segment at 291 to 349 (GVTPSTPVQQQQPASVPEQAAQPASTDPNANGAVSTSAPDAAPVTAAQPSAPSTAPITP) is disordered. Over residues 292–315 (VTPSTPVQQQQPASVPEQAAQPAS) the composition is skewed to low complexity. The segment covering 316–328 (TDPNANGAVSTSA) has biased composition (polar residues). The span at 331 to 349 (AAPVTAAQPSAPSTAPITP) shows a compositional bias: low complexity.

The protein belongs to the LpoA family. In terms of assembly, interacts with PBP1a.

Its subcellular location is the cell outer membrane. Functionally, regulator of peptidoglycan synthesis that is essential for the function of penicillin-binding protein 1A (PBP1a). The polypeptide is Penicillin-binding protein activator LpoA (Serratia proteamaculans (strain 568)).